Here is a 483-residue protein sequence, read N- to C-terminus: PRAME family member 12 (483 aa).

One copy of the LRR 1; degenerate repeat lies at 97-122 (RWKLQVLDLRNVDENFWGIWSGASAL). One copy of the LRR 2; degenerate repeat lies at 177-201 (HVCCKELQIFGIAIHRIIEVLNTVE). An LRR 3; degenerate repeat occupies 202–228 (LDCIQEVEVCCPWELSILIRFAPYLGQ). One copy of the LRR 4; degenerate repeat lies at 229 to 264 (MRNLRKLVLFNIHVSACIPLDRKEQFVIQFTSQFLK). LRR repeat units lie at residues 265–290 (LDYF…LRCL), 291–322 (QAPL…RQLK), 323–341 (ELDL…PLSV), 347–374 (EATL…ALSR), and 375–399 (CSQL…LLRH).

It belongs to the PRAME family.

The polypeptide is PRAME family member 12 (Homo sapiens (Human)).